We begin with the raw amino-acid sequence, 214 residues long: Ribosomal RNA small subunit methyltransferase G (214 aa).

S-adenosyl-L-methionine contacts are provided by residues Gly-58, 109–110 (AE), and Arg-126.

Belongs to the methyltransferase superfamily. RNA methyltransferase RsmG family.

It is found in the cytoplasm. Its function is as follows. Specifically methylates the N7 position of a guanine in 16S rRNA. This chain is Ribosomal RNA small subunit methyltransferase G, found in Ureaplasma parvum serovar 3 (strain ATCC 700970).